Reading from the N-terminus, the 250-residue chain is tRNA pseudouridine synthase A (250 aa).

Residue Asp-53 is the Nucleophile of the active site. Tyr-111 contributes to the substrate binding site.

The protein belongs to the tRNA pseudouridine synthase TruA family. In terms of assembly, homodimer.

It catalyses the reaction uridine(38/39/40) in tRNA = pseudouridine(38/39/40) in tRNA. Its function is as follows. Formation of pseudouridine at positions 38, 39 and 40 in the anticodon stem and loop of transfer RNAs. This chain is tRNA pseudouridine synthase A, found in Streptococcus uberis (strain ATCC BAA-854 / 0140J).